A 719-amino-acid chain; its full sequence is Protein ENHANCED DISEASE RESISTANCE 2-like (719 aa).

Residues lysine 3 to aspartate 110 enclose the PH domain. A disordered region spans residues alanine 134–serine 173. One can recognise an START domain in the interval glutamate 180–glutamine 392. A disordered region spans residues alanine 414–proline 478. The span at serine 426 to serine 439 shows a compositional bias: polar residues. Residues methionine 442–proline 461 show a composition bias toward acidic residues. A compositionally biased stretch (basic and acidic residues) spans glutamate 462–glutamate 477. A helical transmembrane segment spans residues glycine 665–valine 685.

The protein resides in the endoplasmic reticulum membrane. The protein localises to the cell membrane. It is found in the endosome membrane. Binds to phosphatidylinositol-4-phosphate (PtdIns(4)P). May regulate the salicylic acid- (SA-) mediated resistance to pathogens. In Arabidopsis thaliana (Mouse-ear cress), this protein is Protein ENHANCED DISEASE RESISTANCE 2-like (EDR2L).